A 293-amino-acid chain; its full sequence is HTH-type transcriptional regulator HdfR (293 aa).

The HTH lysR-type domain maps to 1–58 (MDTELLKTFLEVSRTRHFGRAAESLYLTQSAVSFRIRQLENQLGANLFTRHRNNIRLT). Positions 18-37 (FGRAAESLYLTQSAVSFRIR) form a DNA-binding region, H-T-H motif.

It belongs to the LysR transcriptional regulatory family.

In terms of biological role, negatively regulates the transcription of the flagellar master operon flhDC by binding to the upstream region of the operon. This Yersinia enterocolitica serotype O:8 / biotype 1B (strain NCTC 13174 / 8081) protein is HTH-type transcriptional regulator HdfR.